The primary structure comprises 54 residues: Ovomucoid (54 aa).

The 51-residue stretch at 4 to 54 (VDCSDYPKPVCTLDYMPLCGSDNKTYSNKCNFCNAVVDSNGTITLSHFGRC) folds into the Kazal-like domain. Cystine bridges form between cysteine 6–cysteine 36, cysteine 14–cysteine 33, and cysteine 22–cysteine 54. Asparagine 43 carries an N-linked (GlcNAc...) asparagine glycan.

It localises to the secreted. In Coloeus monedula (Eurasian jackdaw), this protein is Ovomucoid.